The primary structure comprises 301 residues: Acetyl-coenzyme A carboxylase carboxyl transferase subunit beta (301 aa).

In terms of domain architecture, CoA carboxyltransferase N-terminal spans 23-292 (VWTKCDSCGQ…PSPDEPRESV (270 aa)). Positions 27, 30, 46, and 49 each coordinate Zn(2+). The segment at 27 to 49 (CDSCGQVLYRAELERNLEVCPKC) adopts a C4-type zinc-finger fold. The tract at residues 280-301 (LPAPSPDEPRESVVVPDQEPEA) is disordered.

The protein belongs to the AccD/PCCB family. In terms of assembly, acetyl-CoA carboxylase is a heterohexamer composed of biotin carboxyl carrier protein (AccB), biotin carboxylase (AccC) and two subunits each of ACCase subunit alpha (AccA) and ACCase subunit beta (AccD). Zn(2+) is required as a cofactor.

It is found in the cytoplasm. The enzyme catalyses N(6)-carboxybiotinyl-L-lysyl-[protein] + acetyl-CoA = N(6)-biotinyl-L-lysyl-[protein] + malonyl-CoA. The protein operates within lipid metabolism; malonyl-CoA biosynthesis; malonyl-CoA from acetyl-CoA: step 1/1. Functionally, component of the acetyl coenzyme A carboxylase (ACC) complex. Biotin carboxylase (BC) catalyzes the carboxylation of biotin on its carrier protein (BCCP) and then the CO(2) group is transferred by the transcarboxylase to acetyl-CoA to form malonyl-CoA. The sequence is that of Acetyl-coenzyme A carboxylase carboxyl transferase subunit beta from Enterobacter sp. (strain 638).